A 491-amino-acid chain; its full sequence is Ketol-acid reductoisomerase (NADP(+)) (491 aa).

In terms of domain architecture, KARI N-terminal Rossmann spans 15 to 208; that stretch reads AQLGKCRFMG…GGHRAGVLES (194 aa). Residues 45–48, R68, R76, S78, and 108–110 each bind NADP(+); these read CGAQ and DKQ. Residue H132 is part of the active site. Residue G158 participates in NADP(+) binding. KARI C-terminal knotted domains are found at residues 209–344 and 345–484; these read SFVA…TAPQ and FEGK…MTDM. Residues D217, E221, E389, and E393 each contribute to the Mg(2+) site. Residue S414 coordinates substrate.

This sequence belongs to the ketol-acid reductoisomerase family. It depends on Mg(2+) as a cofactor.

The catalysed reaction is (2R)-2,3-dihydroxy-3-methylbutanoate + NADP(+) = (2S)-2-acetolactate + NADPH + H(+). It carries out the reaction (2R,3R)-2,3-dihydroxy-3-methylpentanoate + NADP(+) = (S)-2-ethyl-2-hydroxy-3-oxobutanoate + NADPH + H(+). It participates in amino-acid biosynthesis; L-isoleucine biosynthesis; L-isoleucine from 2-oxobutanoate: step 2/4. It functions in the pathway amino-acid biosynthesis; L-valine biosynthesis; L-valine from pyruvate: step 2/4. Its function is as follows. Involved in the biosynthesis of branched-chain amino acids (BCAA). Catalyzes an alkyl-migration followed by a ketol-acid reduction of (S)-2-acetolactate (S2AL) to yield (R)-2,3-dihydroxy-isovalerate. In the isomerase reaction, S2AL is rearranged via a Mg-dependent methyl migration to produce 3-hydroxy-3-methyl-2-ketobutyrate (HMKB). In the reductase reaction, this 2-ketoacid undergoes a metal-dependent reduction by NADPH to yield (R)-2,3-dihydroxy-isovalerate. This chain is Ketol-acid reductoisomerase (NADP(+)), found in Salmonella dublin (strain CT_02021853).